A 3263-amino-acid polypeptide reads, in one-letter code: MHVRYLQHEHTGTVQLLLMPLSTAASFKSAKWTEEEGEEECDSVPLPIQTFLWRQTNPFLGDKIGKLHEASCVTFERVVVQNILHGLSPSLSNALASVSRWKLVRAALPHVIQCCGSLLLANVGEKKLPTSLQKILYILHWMLIDSSSECIENASTKDDRSVCQSRTQGLFNISSIQLFIYLIAPLADVISEEEVVDNIRLESGLKVWQAIWQFRQPDVWCFSAPVKQRRDELPQITFARRQNPAQLDTQGIYLGKDENTVRRPSIVPPPKPPRTDVTVLNEKRKLEEEKMKMKEDYVAIEIEAPSLKPNDLLIDMSQGVRNKEFERTSSIVRSVSEYKTNLCGQKEKLATVSKSRTSDAFDSSPTSDSSANMLEEVEGIKFSENENCSLSAVFFSSDQAPLVNLSDICSGFSIEEPHDSTQSSVEVPQHPVLESSMFLSTTSSASDVPPFVLTRASTAEDTTSSCSQQTVIPLAMPVTTETTTLPVTLPKSALTKTTNENRRTDHQRMPSTQKSVSGSTDDELDEGSFSDPTIASYLDVAVIRALLITHWQEKGVYWALSYIHNRLIEIKAYMIIRKSTRQRSNSLPSGERKLSVAPEQLTNPVWDDLKIENKPEEGRSHLHVAFNDTERRKSSDNCLAPHPTTNSRRSSLNTLSRRGINRSNPSLSNSVEVLSIRDDAEDDVSNISSKSIEKENTKLNAVFYPEALGSTNFIEKDGKISATVIVQTVNQVMDRCTGVRQCELALNIADVLLGTPLEQTETFFVQLNIMVFKIYLCLGCPHGCNEGVKSPHGDFLRAKAKAILAGLERVQPDKFKNILNDYVDNYGTQQVIDLLHSITSFCRSELTALDGRRASESRVPSYRNTFNEKDKGIEGRIINATYKTLITKISVISAELSLPENMSLQQDVRLLVNFVQEHHGNPFRRVGLSALKDATCKNPTTSDFHTKEDQTGGSPGAQSQKQSNDQASLRRGLFKKKNEKSGGTTTGNDDSEGDSSPSTPRTVSSMDDGVSPLASTSYYKKKSAPKLHFAFGLLKSVKPDMDEEISDNENEEGTSNEEAGLPQRRPLRQSSKQVKARLPIDSKGGMRLWGTYVPPPNYIDAKGIFDGARRFAFLLETARPGTFPDAPLIAAIMHLKSPVLARASLLLECANLVSRCNRGQWPEWIRSSHHRTFSLGGALANRGTPSATRRMHSLQRQAGRYFYQWGVQIGEHISKLLELSENKSKKTLQMEDTIEDFFDDGIVNNQNGEKCPIALQFIAVLLLQEITAFLRETFKTIPRSKNSKPQTGNSGWDKLLSHRRWSILSNTFNAQQTGSVNSITEINSSIHLNDKERRISFSATEEDSPRGSKDAIDEINAVDKKGSIHMQVVRPPSLSARLFSRQSTHEESGGSAQGSTKSTTYVPETGRRIATGRQRLLKRGSPMATGTQPSLESSHKRKSFRNRKQSKQAHLEEEEKSDGGSLTSQQSPIVQRMRAASMRQSSNFLALFHHAIPEFLDAGATHILSARESLKPTDDGLQSPVESVHPVIIPHSNHGSAHSQQPVVLKSSMDDEEQHMLSNLPWIKVLIKFSNSFDLECNHVGVCSAKCFQRVHRQCFRMIESLSTLYGMERNVSTRADKRNLLADNWQAKQQALRKQTETNSARASIHARQSTAVPRRESAMVGQPEFASKAIKMMLMEKMQQEKEKEKEKEKEEKDALKKQSVEQDHSSTDTEEDAQLPEKNKPMLTYLRSLVLQLVHSPISSVLKCCLLLSVEQHKQMIEVCWKMLIHEDPHVVASAASMFIVASVKKSEESLLIIKTALDSQDPQVRTSGIQRFYTLWRNRFHAWLKMEDGAQASFKVPPPGIDFTLPSPAIGQSQLPVVDPPWMPHLKTKIEELSLKEEEHATSQTIMTMTRTRRKQKQEMVKRAVREAEERQSEQRQLFRLRSSAIVSLAAYEPALFHHQQEQTEESDNSHQHARHVMPVAQPLFPSALLSVVPQIIELLDDPQVDNNGVSVGDVAKKVIWTCIVEDPSLFLRHFLEKLTNRDRQVLISEYAPTPAYEALMSQLRKLVLRFHPLPSQAAHSLLNYLFGFVMHYVRAQCEGSEKAIGMALSICWLLSPNIHGLYFKDLKQTLKKEQCDQALMITANVPSAKKIIVHGLDSTSGGIPSQFPVHEDTQFHQILNDSLEFFNIDEDDLNCFYLTDTKTGVIHLPAAYVRDYYFFHRSFYPQLTLVKLSPEVAEKKMKETAFHQKFIECGKVLLTHNILKYSPQHVIAQRVFFLHDEFTHLPSFPRKSLETCFGMYFGPGGEQLKAMESMHKFVWAKMMSDMFEKMENAFMFADLHLFINVINGIMIMHCEDVLILRRCAATYISISIHFNTLFASQGFFLIMPTLLRCYSQRQTNKVFCGVVEFICRQFYTLHRKPFLLQMCGAIANIIDNSSNDFEINPMRVKAKYWFNLIKKMEEITDEDPLDILGLVPYEKPLKALDLCYRDDPNTFCALTDAMASCICVCAFSPESKRSHHMLLIMQAMLPHMMKRLEEETLQSGNSPAAVKHEISQWITMAVEMKALINSCEQLVRGPTRAFDLVNSVSERGKSFVADSPQFFDPPTTNEDENSRPYHLKEKRSTAVAWEAAEVEEQQKETYRRPRDTLLQLIAAYIEMASVRLKELTKLGANLEHAKIPDVLDHKCYVKLGEVALALLKVAPYDLSTTTCHGLQKYFQIILPVTDWSIESNRSALNIILRRLDKTLSKIAKRQSFRKRAIWIALSSWINGICDTLNAFPYIAHLHPLRTITQLCLRMMVGDPCVEDSAASTALHPTTVLHPTPPPQTFANAVLRLTTILMQALGQFAFSLDFVTSTEGMGVSSERLEAVLCHVLIPLFLRIPNNPKEQSIFQAKDLSQCLTVMQNAISPPLVKQQAPPLISTSTLTTTFIRGAQDVTGRQGSVSVTDRGHSATVSTHRIVRESICQAIYLGLKVLMLTFGKLLAPMWPRVARIVKDLLAKKPGAPTSMAFVDFLLHSNLPISLFILPMIQNKMKQKPGTDQEAAWQTEILEKLDAKSHNIVPPSILLVKCYQELQQLKEELTMKPIEMTRSYTPTMADPHSDSSAASTAPRGASSRQSIDRRTSVHMKKVLPTMKEDIPEDPEDSEDVIDSNSTGQVTSRISKSPSIPLNKTHQSSRTRSVSGFGMWRSVRRKSRHVSSAEESSEERGSVELHDVGHHSALHEPNRTPNRRSTEALVLPLHESIDTNRHRFVSFSTPKKTHEVSEDVFQITEQHQLV.

Disordered stretches follow at residues 491 to 527 (KSAL…LDEG), 627 to 666 (NDTE…SNPS), 939 to 1010 (PTTS…DDGV), 1042 to 1076 (DEEI…QVKA), 1380 to 1475 (SRQS…RMRA), 1633 to 1660 (LRKQ…RESA), and 1680 to 1721 (MQQE…LPEK). Residues 499 to 508 (NENRRTDHQR) are compositionally biased toward basic and acidic residues. Polar residues predominate over residues 509-519 (MPSTQKSVSGS). The span at 644–658 (TTNSRRSSLNTLSRR) shows a compositional bias: low complexity. Composition is skewed to polar residues over residues 956 to 967 (GAQSQKQSNDQA) and 981 to 1005 (SGGT…TVSS). Positions 1042 to 1055 (DEEISDNENEEGTS) are enriched in acidic residues. Over residues 1393-1402 (QGSTKSTTYV) the composition is skewed to polar residues. The span at 1435–1447 (HKRKSFRNRKQSK) shows a compositional bias: basic residues. Polar residues-rich tracts occupy residues 1460–1469 (GSLTSQQSPI) and 1633–1653 (LRKQ…QSTA). Positions 1680 to 1710 (MQQEKEKEKEKEKEEKDALKKQSVEQDHSST) are enriched in basic and acidic residues. 5 helical membrane passes run 2088 to 2108 (AIGM…GLYF), 2318 to 2338 (AFMF…MIMH), 2352 to 2372 (YISI…FLIM), 2953 to 2973 (AIYL…APMW), and 2995 to 3015 (AFVD…LPMI). Disordered regions lie at residues 3078–3166 (YTPT…RTRS) and 3178–3198 (RKSR…SVEL). Acidic residues predominate over residues 3124 to 3135 (IPEDPEDSEDVI). Residues 3138–3166 (NSTGQVTSRISKSPSIPLNKTHQSSRTRS) are compositionally biased toward polar residues.

The protein belongs to the unc-80 family. Expressed in the nervous system. Expressed in both acetylcholine and GABA motor neurons.

It localises to the membrane. Functionally, probable component of the nca-1 sodium channel complex, a cation channel that regulates neuronal activity by transmitting depolarization signals to synapses. Regulates the transition from slow to rapid forms of locomotion. Required for localization of nca-1 along axons and in non-synaptic regions. Contributes to endocytosis defects in synaptojanin mutants. Involved in the control of anasthetic response to halothane. The polypeptide is Protein unc-80 (unc-80) (Caenorhabditis elegans).